We begin with the raw amino-acid sequence, 130 residues long: MIYGIGTDICDLRRIAATFERQGERFAHRVLSDAEFAVWKARSERWPKRGLSYLATRFSAKEAFSKAIGLGMRMPMSWRLCEIANLRSGKPVIVLHGELKEWFEARGLTAHVTVTDETEYAASFVVVEKL.

Mg(2+)-binding residues include Asp-8 and Glu-62.

The protein belongs to the P-Pant transferase superfamily. AcpS family. Mg(2+) is required as a cofactor.

The protein resides in the cytoplasm. The enzyme catalyses apo-[ACP] + CoA = holo-[ACP] + adenosine 3',5'-bisphosphate + H(+). Transfers the 4'-phosphopantetheine moiety from coenzyme A to a Ser of acyl-carrier-protein. The sequence is that of Holo-[acyl-carrier-protein] synthase from Variovorax paradoxus (strain S110).